A 346-amino-acid chain; its full sequence is Putative serine/threonine-protein kinase K06H7.1 (346 aa).

One can recognise a Protein kinase domain in the interval 20–287 (YKVVQKLGEG…KLFKLLEDVM (268 aa)). ATP is bound by residues 26-34 (LGEGGCGSV) and Lys-50. The Proton acceptor role is filled by Asp-141. The segment at 302–326 (PEKKKNPASQGNKFGLGKKGTKESG) is disordered.

It belongs to the protein kinase superfamily. Ser/Thr protein kinase family.

It carries out the reaction L-seryl-[protein] + ATP = O-phospho-L-seryl-[protein] + ADP + H(+). The enzyme catalyses L-threonyl-[protein] + ATP = O-phospho-L-threonyl-[protein] + ADP + H(+). This Caenorhabditis elegans protein is Putative serine/threonine-protein kinase K06H7.1.